Reading from the N-terminus, the 390-residue chain is Nuclear receptor subfamily 2 group F member 6 (390 aa).

Over residues 1-15 (MAMVTGGWGGPGGDT) the composition is skewed to gly residues. The disordered stretch occupies residues 1–50 (MAMVTGGWGGPGGDTNGVDKAGGSYPRATEDDSASPPGATSDAEPGDEER). Phosphoserine occurs at positions 35 and 41. Residues 54 to 129 (QVDCVVCGDK…VGMRKEAVQP (76 aa)) constitute a DNA-binding region (nuclear receptor). NR C4-type zinc fingers lie at residues 57-77 (CVVCGDKSSGKHYGVFTCEGC) and 93-117 (CRSNRDCQIDQHHRNQCQYCRLKKC). Positions 157 to 380 (PVSELIAQLL…TLIRDMLLSG (224 aa)) constitute an NR LBD domain. Residues 314 to 390 (LQEKAQVALT…STFNWPYGSG (77 aa)) form an important for dimerization region.

Belongs to the nuclear hormone receptor family. NR2 subfamily. Binds DNA as dimer; homodimer and heterodimer with NR2F2 and probably NR2F1. Interacts with THRB.

It is found in the nucleus. In terms of biological role, transcription factor predominantly involved in transcriptional repression. Binds to promoter/enhancer response elements that contain the imperfect 5'-AGGTCA-3' direct or inverted repeats with various spacings which are also recognized by other nuclear hormone receptors. Involved in modulation of hormonal responses. Represses transcriptional activity of the lutropin-choriogonadotropic hormone receptor/LHCGR gene, the renin/REN gene and the oxytocin-neurophysin/OXT gene. Represses the triiodothyronine-dependent and -independent transcriptional activity of the thyroid hormone receptor gene in a cell type-specific manner. The corepressing function towards thyroid hormone receptor beta/THRB involves at least in part the inhibition of THRB binding to triiodothyronine response elements (TREs) by NR2F6. Inhibits NFATC transcription factor DNA binding and subsequently its transcriptional activity. Acts as transcriptional repressor of IL-17 expression in Th-17 differentiated CD4(+) T cells and may be involved in induction and/or maintenance of peripheral immunological tolerance and autoimmunity. Involved in development of forebrain circadian clock; is required early in the development of the locus coeruleus (LC). The protein is Nuclear receptor subfamily 2 group F member 6 (Nr2f6) of Rattus norvegicus (Rat).